The sequence spans 94 residues: Co-chaperonin GroES (94 aa).

It belongs to the GroES chaperonin family. Heptamer of 7 subunits arranged in a ring. Interacts with the chaperonin GroEL.

The protein resides in the cytoplasm. Together with the chaperonin GroEL, plays an essential role in assisting protein folding. The GroEL-GroES system forms a nano-cage that allows encapsulation of the non-native substrate proteins and provides a physical environment optimized to promote and accelerate protein folding. GroES binds to the apical surface of the GroEL ring, thereby capping the opening of the GroEL channel. The polypeptide is Co-chaperonin GroES (Clostridium perfringens (strain SM101 / Type A)).